A 1165-amino-acid chain; its full sequence is DNA-directed RNA polymerase subunit beta' (1165 aa).

Positions 60, 62, 75, and 78 each coordinate Zn(2+). The Mg(2+) site is built by Asp449, Asp451, and Asp453. The Zn(2+) site is built by Cys794, Cys868, Cys875, and Cys878.

This sequence belongs to the RNA polymerase beta' chain family. In terms of assembly, the RNAP catalytic core consists of 2 alpha, 1 beta, 1 beta' and 1 omega subunit. When a sigma factor is associated with the core the holoenzyme is formed, which can initiate transcription. Mg(2+) serves as cofactor. Requires Zn(2+) as cofactor.

The enzyme catalyses RNA(n) + a ribonucleoside 5'-triphosphate = RNA(n+1) + diphosphate. In terms of biological role, DNA-dependent RNA polymerase catalyzes the transcription of DNA into RNA using the four ribonucleoside triphosphates as substrates. The chain is DNA-directed RNA polymerase subunit beta' from Acetivibrio thermocellus (strain ATCC 27405 / DSM 1237 / JCM 9322 / NBRC 103400 / NCIMB 10682 / NRRL B-4536 / VPI 7372) (Clostridium thermocellum).